Consider the following 616-residue polypeptide: Putative L-type lectin-domain containing receptor kinase I.10 (616 aa).

The first 22 residues, Met-1–Gln-22, serve as a signal peptide directing secretion. Over Gln-23 to Leu-288 the chain is Extracellular. The tract at residues Glu-24 to Ser-258 is legume-lectin like. N-linked (GlcNAc...) asparagine glycans are attached at residues Asn-56, Asn-124, Asn-181, Asn-204, and Asn-225. The chain crosses the membrane as a helical span at residues Phe-289 to Phe-309. Residues Phe-310 to Pro-616 lie on the Cytoplasmic side of the membrane. A Protein kinase domain is found at Phe-343–Pro-616. ATP-binding positions include Leu-349 to Val-357 and Lys-371. Asp-467 functions as the Proton acceptor in the catalytic mechanism.

It in the C-terminal section; belongs to the protein kinase superfamily. Ser/Thr protein kinase family. The protein in the N-terminal section; belongs to the leguminous lectin family.

Its subcellular location is the cell membrane. It catalyses the reaction L-seryl-[protein] + ATP = O-phospho-L-seryl-[protein] + ADP + H(+). The catalysed reaction is L-threonyl-[protein] + ATP = O-phospho-L-threonyl-[protein] + ADP + H(+). The protein is Putative L-type lectin-domain containing receptor kinase I.10 (LECRK110) of Arabidopsis thaliana (Mouse-ear cress).